The primary structure comprises 1090 residues: Vinculin (1090 aa).

Tandem repeats lie at residues 339–446 and 455–561. Residues 339–561 are 2 X repeats; sequence DADNVTVMRK…LKNALRDLGD (223 aa). 2 disordered regions span residues 811–842 and 864–895; these read GVPM…SQVI and DIPA…EEET. The segment covering 817–830 has biased composition (polar residues); that stretch reads GRHSSYQESISRAS. Residues 866 to 887 are compositionally biased toward pro residues; that stretch reads PAPPRPPPPVELSPPPRPPPPP.

It belongs to the vinculin/alpha-catenin family. In terms of assembly, may interact with sorb-1. Expressed in gonadal sheath cells and the spermatheca. Expressed in body wall muscles.

The protein localises to the cytoplasm. It is found in the cytoskeleton. Its subcellular location is the cell junction. The protein resides in the adherens junction. It localises to the cell membrane. The protein localises to the focal adhesion. In terms of biological role, involved in cell adhesion. May be involved in the attachment of the actin-based microfilaments to the plasma membrane. Involved in ovulation. In Caenorhabditis elegans, this protein is Vinculin.